The following is a 253-amino-acid chain: 5-oxoprolinase subunit A (253 aa).

This sequence belongs to the LamB/PxpA family. As to quaternary structure, forms a complex composed of PxpA, PxpB and PxpC.

The enzyme catalyses 5-oxo-L-proline + ATP + 2 H2O = L-glutamate + ADP + phosphate + H(+). Catalyzes the cleavage of 5-oxoproline to form L-glutamate coupled to the hydrolysis of ATP to ADP and inorganic phosphate. This Syntrophobacter fumaroxidans (strain DSM 10017 / MPOB) protein is 5-oxoprolinase subunit A.